Here is a 214-residue protein sequence, read N- to C-terminus: Small ribosomal subunit protein uS2 (214 aa).

This sequence belongs to the universal ribosomal protein uS2 family.

This is Small ribosomal subunit protein uS2 from Thermofilum pendens (strain DSM 2475 / Hrk 5).